Here is a 654-residue protein sequence, read N- to C-terminus: Threonine--tRNA ligase (654 aa).

A TGS domain is found at 1 to 63 (MAQISLTFPD…DADASIAIHT (63 aa)). The catalytic stretch occupies residues 247–544 (DHRKLGREMN…LIENFAGKLP (298 aa)). Positions 344, 395, and 521 each coordinate Zn(2+).

Belongs to the class-II aminoacyl-tRNA synthetase family. Homodimer. Zn(2+) is required as a cofactor.

Its subcellular location is the cytoplasm. The enzyme catalyses tRNA(Thr) + L-threonine + ATP = L-threonyl-tRNA(Thr) + AMP + diphosphate + H(+). Catalyzes the attachment of threonine to tRNA(Thr) in a two-step reaction: L-threonine is first activated by ATP to form Thr-AMP and then transferred to the acceptor end of tRNA(Thr). Also edits incorrectly charged L-seryl-tRNA(Thr). The protein is Threonine--tRNA ligase of Dinoroseobacter shibae (strain DSM 16493 / NCIMB 14021 / DFL 12).